We begin with the raw amino-acid sequence, 480 residues long: Protein disulfide-isomerase 5-4 (480 aa).

2 N-linked (GlcNAc...) asparagine glycosylation sites follow: Asn-74 and Asn-99. One can recognise a Thioredoxin domain in the interval Phe-120–Glu-263. Catalysis depends on nucleophile residues Cys-170 and Cys-173. Cys-170 and Cys-173 are disulfide-bonded. N-linked (GlcNAc...) asparagine glycosylation is found at Asn-280, Asn-326, and Asn-376. Residues Phe-439–Ile-459 form a helical membrane-spanning segment.

Belongs to the protein disulfide isomerase family. In terms of tissue distribution, widely expressed.

The protein resides in the membrane. Acts as a protein-folding catalyst that interacts with nascent polypeptides to catalyze the formation, isomerization, and reduction or oxidation of disulfide bonds. The chain is Protein disulfide-isomerase 5-4 (PDIL5-4) from Arabidopsis thaliana (Mouse-ear cress).